Reading from the N-terminus, the 331-residue chain is Protein RecA (331 aa).

Residue G66 to T73 coordinates ATP.

Belongs to the RecA family.

The protein localises to the cytoplasm. Functionally, can catalyze the hydrolysis of ATP in the presence of single-stranded DNA, the ATP-dependent uptake of single-stranded DNA by duplex DNA, and the ATP-dependent hybridization of homologous single-stranded DNAs. It interacts with LexA causing its activation and leading to its autocatalytic cleavage. The protein is Protein RecA of Lactobacillus delbrueckii subsp. bulgaricus (strain ATCC 11842 / DSM 20081 / BCRC 10696 / JCM 1002 / NBRC 13953 / NCIMB 11778 / NCTC 12712 / WDCM 00102 / Lb 14).